Consider the following 469-residue polypeptide: Mitochondrial-processing peptidase subunit beta (469 aa).

H78 serves as a coordination point for Zn(2+). Catalysis depends on E81, which acts as the Proton acceptor. H82 and E159 together coordinate Zn(2+).

The protein belongs to the peptidase M16 family. As to quaternary structure, heterodimer of alpha and beta subunits, forming the mitochondrial processing protease (MPP) in which subunit alpha is involved in substrate recognition and binding and subunit beta is the catalytic subunit. mppB is probably also part of the cytochrome bc1 complex as a core I protein in the mitochondrial inner membrane. Zn(2+) serves as cofactor.

It localises to the mitochondrion inner membrane. The protein localises to the mitochondrion matrix. The catalysed reaction is Release of N-terminal transit peptides from precursor proteins imported into the mitochondrion, typically with Arg in position P2.. With respect to regulation, binding to alpha subunit is required for catalytic activity. Catalytic subunit of the essential mitochondrial processing protease (MPP), which cleaves the mitochondrial sequence off newly imported precursors proteins. Preferentially, cleaves after an arginine at position P2. Plays an essential role in mitochondrial biogenesis. In Dictyostelium discoideum (Social amoeba), this protein is Mitochondrial-processing peptidase subunit beta (mppB).